The chain runs to 129 residues: 3-aminoacrylate deaminase RutC (129 aa).

It belongs to the RutC family.

The catalysed reaction is (Z)-3-aminoacrylate + H2O + H(+) = 3-oxopropanoate + NH4(+). In terms of biological role, involved in pyrimidine catabolism. Catalyzes the deamination of 3-aminoacrylate to malonic semialdehyde, a reaction that can also occur spontaneously. RutC may facilitate the reaction and modulate the metabolic fitness, rather than catalyzing essential functions. The protein is 3-aminoacrylate deaminase RutC of Yersinia enterocolitica serotype O:8 / biotype 1B (strain NCTC 13174 / 8081).